A 387-amino-acid polypeptide reads, in one-letter code: Short-chain dehydrogenase/reductase family 42E member 1 (387 aa).

Tyr149 functions as the Proton acceptor in the catalytic mechanism. Position 153 (Lys153) interacts with NAD(+). 2 consecutive transmembrane segments (helical) span residues 279-299 and 365-385; these read LPIS…FVVG and ILDV…LPVV.

This sequence belongs to the 3-beta-HSD family.

It is found in the membrane. In Danio rerio (Zebrafish), this protein is Short-chain dehydrogenase/reductase family 42E member 1 (sdr42e1).